The following is a 520-amino-acid chain: Keratin, type II cytoskeletal 78 (520 aa).

Residues 1 to 110 (MSLSPCRAQR…DPQFQVVRTQ (110 aa)) are head. The tract at residues 111–146 (ETQEIRTLNNQFASFIDKVRFLEQQNKVLETKWHLL) is coil 1A. The IF rod domain occupies 111 to 424 (ETQEIRTLNN…RLLEGEECRM (314 aa)). The segment at 147–165 (QQQGLSGSQQGLEPVFEAC) is linker 1. Residues 166-258 (LDQLRKQLEQ…LNEEELGQLQ (93 aa)) are coil 1B. The linker 12 stretch occupies residues 259–281 (TQASDTSVVLSMDNNRYLDFSSI). The tract at residues 282–421 (ITEVRARYEE…TYRRLLEGEE (140 aa)) is coil 2. The interval 422-520 (CRMSGECTSQ…ESSLKTSITY (99 aa)) is tail.

The protein belongs to the intermediate filament family. As to quaternary structure, heterotetramer of two type I and two type II keratins. As to expression, in non-keratinising esophageal and vaginal epithelium, strongly expressed in the basal and parabasal/lower suprabasal cell layers with considerably decreased expression in the mid/upper suprabasal layers (at protein level). A similar gradient from basal to lower suprabasal layers is seen in the partially keratinised dorsal tongue epithelium, in the scalp and in the plantar epidermis (at protein level). Extension of expression into the suprabasal compartments is distinctly more pronounced in non-keratinising epithelia than in keratinising epithelia and epidermis (at protein level). In scalp sections, present in the interfollicular epidermis and infundibulum including the entire outer root sheath of the hair follicles and also in the sebocytes (at protein level). In sweat glands, expressed in peripheral and luminal cells of the lower duct and in peripheral cells of the middle/upper duct with no expression observed in luminal cells (at protein level). In embryos at the 14th week of pregnancy, detected in basal and parabasal layers but is absent from the uppermost epidermal layer (at protein level). Expressed in tongue epithelium.

This is Keratin, type II cytoskeletal 78 (KRT78) from Homo sapiens (Human).